Here is a 328-residue protein sequence, read N- to C-terminus: Flagellar motor switch protein FliM (328 aa).

The segment at 1–45 (MSDVLSQEEINQLIEALMKGELKEEDLLKEEEEKKVKPYDFKRPS) is interaction with unphosphorylated CheY.

It belongs to the FliM family. Interacts (via N-terminus) with unphosphorylated CheY. Interacts (via central domain) with FliG (via central domain or via central domain and C-terminus).

It localises to the cell inner membrane. Its subcellular location is the bacterial flagellum basal body. Its function is as follows. FliM is one of three proteins (FliG, FliN, FliM) that forms the rotor-mounted switch complex (C ring), located at the base of the basal body. This complex interacts with the CheY and CheX chemotaxis proteins, in addition to contacting components of the motor that determine the direction of flagellar rotation. In Thermotoga maritima (strain ATCC 43589 / DSM 3109 / JCM 10099 / NBRC 100826 / MSB8), this protein is Flagellar motor switch protein FliM.